Consider the following 224-residue polypeptide: MKFVAFERAKQGTGASRRLRISGKTPGIVYGGEGKPQLIELDHNALWHALKKEAFHSSILEMELGGATSKVLLRDVQYHPFRQLVQHIDFQRVDAKTRMHMKVPLHYKGEEESDAVKLDHNLVTHVMTELEVSCLPADLPEFIEVDLSGLKKNATLHVNDIKLPKGVKFVSHGKLNPVIVSAVPPLVSEEPAPAAEGAAPAEGAAAAAAGGKPAAKTAKPAAKK.

Positions 190-224 (EPAPAAEGAAPAEGAAAAAAGGKPAAKTAKPAAKK) are disordered.

The protein belongs to the bacterial ribosomal protein bL25 family. CTC subfamily. As to quaternary structure, part of the 50S ribosomal subunit; part of the 5S rRNA/L5/L18/L25 subcomplex. Contacts the 5S rRNA. Binds to the 5S rRNA independently of L5 and L18.

In terms of biological role, this is one of the proteins that binds to the 5S RNA in the ribosome where it forms part of the central protuberance. In Variovorax paradoxus (strain S110), this protein is Large ribosomal subunit protein bL25.